A 404-amino-acid polypeptide reads, in one-letter code: S-adenosylmethionine synthase (404 aa).

ATP is bound at residue 139–144 (GKGSTD).

This sequence belongs to the AdoMet synthase 2 family. The cofactor is Mg(2+).

It carries out the reaction L-methionine + ATP + H2O = S-adenosyl-L-methionine + phosphate + diphosphate. The protein operates within amino-acid biosynthesis; S-adenosyl-L-methionine biosynthesis; S-adenosyl-L-methionine from L-methionine: step 1/1. Functionally, catalyzes the formation of S-adenosylmethionine from methionine and ATP. This chain is S-adenosylmethionine synthase, found in Saccharolobus islandicus (strain Y.N.15.51 / Yellowstone #2) (Sulfolobus islandicus).